The sequence spans 218 residues: Adenylate kinase (218 aa).

10–15 (GAGKGT) contacts ATP. The segment at 30–59 (STGDIFREAIAKGTELGRKVQDIVNSGNLV) is NMP. Residues Thr-31, Arg-36, 57–59 (NLV), 85–88 (GYPR), and Gln-92 contribute to the AMP site. Residues 126-163 (TRRVCSKCGKVYNVITLPSKVEGICDDCGGTLIQRDDD) are LID. Arg-127 provides a ligand contact to ATP. Zn(2+) is bound by residues Cys-130 and Cys-133. ATP is bound at residue 136–137 (VY). Zn(2+)-binding residues include Cys-150 and Cys-153. The AMP site is built by Arg-160 and Arg-171. Lys-199 contributes to the ATP binding site.

This sequence belongs to the adenylate kinase family. As to quaternary structure, monomer.

It localises to the cytoplasm. It carries out the reaction AMP + ATP = 2 ADP. The protein operates within purine metabolism; AMP biosynthesis via salvage pathway; AMP from ADP: step 1/1. In terms of biological role, catalyzes the reversible transfer of the terminal phosphate group between ATP and AMP. Plays an important role in cellular energy homeostasis and in adenine nucleotide metabolism. This is Adenylate kinase from Fervidobacterium nodosum (strain ATCC 35602 / DSM 5306 / Rt17-B1).